A 159-amino-acid polypeptide reads, in one-letter code: Large ribosomal subunit protein mL50 (159 aa).

It belongs to the mitochondrion-specific ribosomal protein mL50 family. Component of the mitochondrial ribosome large subunit (39S) which comprises a 16S rRNA and about 50 distinct proteins.

Its subcellular location is the mitochondrion. This chain is Large ribosomal subunit protein mL50 (Mrpl50), found in Mus musculus (Mouse).